A 140-amino-acid chain; its full sequence is MMNIDDTTSPMAHPIGPSQPPSDQTKQDPPSLPQEAASSVSADKKDLALLEEKPKQSQEEDRVDTGRERLKKHRREIAGRVWIPEIWGQEELLKDWIDCSTFDTCLVPAGISSARTALVEEARRAASASGGLHNRCLILR.

Polar residues predominate over residues 1–10 (MMNIDDTTSP). A disordered region spans residues 1–71 (MMNIDDTTSP…RVDTGRERLK (71 aa)). Positions 42-68 (ADKKDLALLEEKPKQSQEEDRVDTGRE) are enriched in basic and acidic residues.

Interacts with CRY2 in both darkness and light.

The protein resides in the nucleus. In terms of biological role, regulates the blue-light dependent dimerization of CRY2 and formation of photobodies. Interacts with photoexited CRY2 to inhibit its activity. Inhibits CRY phosphorylation. The chain is Protein BIC1 from Arabidopsis thaliana (Mouse-ear cress).